The primary structure comprises 659 residues: UDP-glucuronate:xylan alpha-glucuronosyltransferase 1 (659 aa).

Positions 1 to 14 (MANSPAAPAPTTTT) are enriched in low complexity. The tract at residues 1 to 20 (MANSPAAPAPTTTTGGDSRR) is disordered. A helical; Signal-anchor for type II membrane protein membrane pass occupies residues 70 to 90 (FQIVKLLLFILLSATLFTIIY). Mn(2+) is bound by residues aspartate 416 and aspartate 418. Substrate-binding positions include 416 to 418 (DAD), 445 to 447 (NSG), 472 to 476 (NGGDQ), and 526 to 531 (HYLGMK). Histidine 526 serves as a coordination point for Mn(2+).

Belongs to the glycosyltransferase 8 family. Glycogenin subfamily. It depends on Mn(2+) as a cofactor.

It localises to the golgi apparatus membrane. Glycosyltransferase required for the addition of both glucuronic acid and 4-O-methylglucuronic acid branches to xylan in stem cell walls. In association with GUX2, is responsible for almost all of the substitutions of the xylan backbone in stem glucuronoxylan. This is UDP-glucuronate:xylan alpha-glucuronosyltransferase 1 (GUX1) from Arabidopsis thaliana (Mouse-ear cress).